The following is a 779-amino-acid chain: Protein zer-1 homolog (779 aa).

An N-acetylalanine modification is found at A2. 3 LRR repeats span residues 226 to 245 (SLVL…IVQL), 246 to 281 (HKLR…KLTR), and 291 to 315 (LGNL…KTDE). ARM repeat units follow at residues 440 to 480 (RSEQ…NFSI), 524 to 569 (DNDH…NITD), 571 to 613 (TPDN…NVAE), 615 to 656 (KELR…HIMF), and 727 to 769 (PDKY…HCSN).

It belongs to the zyg-11 family. Interacts with the ELOC-ELOB/Elongin BC complex. Part of an E3 ubiquitin ligase complex including ZER1, CUL2 and Elongin BC.

In terms of biological role, serves as substrate adapter subunit in the E3 ubiquitin ligase complex ZYG11B-CUL2-Elongin BC. Acts redudantly with ZYG11B to target substrates bearing N-terminal glycine degrons for proteasomal degradation. Involved in the clearance of proteolytic fragments generated by caspase cleavage during apoptosis since N-terminal glycine degrons are strongly enriched at caspase cleavage sites. Also important in the quality control of protein N-myristoylation in which N-terminal glycine degrons are conditionally exposed after a failure of N-myristoylation. The sequence is that of Protein zer-1 homolog from Mus musculus (Mouse).